The sequence spans 305 residues: tRNA pseudouridine synthase B (305 aa).

The active-site Nucleophile is Asp-48.

This sequence belongs to the pseudouridine synthase TruB family. Type 1 subfamily.

The catalysed reaction is uridine(55) in tRNA = pseudouridine(55) in tRNA. Responsible for synthesis of pseudouridine from uracil-55 in the psi GC loop of transfer RNAs. This is tRNA pseudouridine synthase B from Pseudomonas putida (strain ATCC 700007 / DSM 6899 / JCM 31910 / BCRC 17059 / LMG 24140 / F1).